The following is a 202-amino-acid chain: uncharacterized protein (202 aa).

Residues 1–6 (MITDFL) are Cytoplasmic-facing. The chain crosses the membrane as a helical; Signal-anchor for type II membrane protein span at residues 7-23 (LAFSILAVSTTLGVSNL). At 24–202 (NKQCRDLLQC…KNGKTRGHSG (179 aa)) the chain is on the extracellular side. Residue asparagine 53 is glycosylated (N-linked (GlcNAc...) asparagine).

The protein localises to the membrane. This is an uncharacterized protein from Caenorhabditis elegans.